Consider the following 79-residue polypeptide: Defensin-like protein 272 (79 aa).

A signal peptide spans 1–24 (MSSKIKFVALLIVVISLLLNNAQS). Disulfide bonds link cysteine 34–cysteine 77, cysteine 43–cysteine 63, cysteine 49–cysteine 75, and cysteine 53–cysteine 76.

Belongs to the DEFL family.

The protein resides in the secreted. The sequence is that of Defensin-like protein 272 from Arabidopsis thaliana (Mouse-ear cress).